We begin with the raw amino-acid sequence, 454 residues long: Allantoinase (454 aa).

Positions 60, 62, 147, 183, 239, and 312 each coordinate Zn(2+). K147 is subject to N6-carboxylysine.

Belongs to the metallo-dependent hydrolases superfamily. Allantoinase family. In terms of assembly, homotetramer. The cofactor is Zn(2+). Carboxylation allows a single lysine to coordinate two zinc ions.

It catalyses the reaction (S)-allantoin + H2O = allantoate + H(+). It functions in the pathway nitrogen metabolism; (S)-allantoin degradation; allantoate from (S)-allantoin: step 1/1. In terms of biological role, catalyzes the conversion of allantoin (5-ureidohydantoin) to allantoic acid by hydrolytic cleavage of the five-member hydantoin ring. The polypeptide is Allantoinase (Bacillus velezensis (strain DSM 23117 / BGSC 10A6 / LMG 26770 / FZB42) (Bacillus amyloliquefaciens subsp. plantarum)).